We begin with the raw amino-acid sequence, 313 residues long: Ribosomal RNA small subunit methyltransferase H (313 aa).

Residues 34–36, D53, F80, D101, and Q108 each bind S-adenosyl-L-methionine; that span reads GGH.

This sequence belongs to the methyltransferase superfamily. RsmH family.

Its subcellular location is the cytoplasm. It catalyses the reaction cytidine(1402) in 16S rRNA + S-adenosyl-L-methionine = N(4)-methylcytidine(1402) in 16S rRNA + S-adenosyl-L-homocysteine + H(+). Its function is as follows. Specifically methylates the N4 position of cytidine in position 1402 (C1402) of 16S rRNA. This is Ribosomal RNA small subunit methyltransferase H from Lacticaseibacillus paracasei (strain ATCC 334 / BCRC 17002 / CCUG 31169 / CIP 107868 / KCTC 3260 / NRRL B-441) (Lactobacillus paracasei).